We begin with the raw amino-acid sequence, 341 residues long: Methionine import ATP-binding protein MetN 1 (341 aa).

Residues 2 to 241 (IEFRQVSKSF…PKTTIAQNFV (240 aa)) form the ABC transporter domain. 38–45 (GYSGAGKS) is a binding site for ATP.

The protein belongs to the ABC transporter superfamily. Methionine importer (TC 3.A.1.24) family. In terms of assembly, the complex is composed of two ATP-binding proteins (MetN), two transmembrane proteins (MetI) and a solute-binding protein (MetQ).

It is found in the cell membrane. It carries out the reaction L-methionine(out) + ATP + H2O = L-methionine(in) + ADP + phosphate + H(+). The catalysed reaction is D-methionine(out) + ATP + H2O = D-methionine(in) + ADP + phosphate + H(+). Its function is as follows. Part of the ABC transporter complex MetNIQ involved in methionine import. Responsible for energy coupling to the transport system. This Staphylococcus aureus (strain MRSA252) protein is Methionine import ATP-binding protein MetN 1.